The following is a 385-amino-acid chain: Probable threonine protease PRSS50 (385 aa).

A signal peptide spans 1–39 (MGRWCQTVARGQRPRTSAPSRAGALLLLLLLLRSAGCWG). The 266-residue stretch at 93-358 (VSEGKVDPYR…YQHWIWDCLN (266 aa)) folds into the Peptidase S1 domain. N-linked (GlcNAc...) asparagine glycosylation is present at Asn-133. The cysteines at positions 138 and 154 are disulfide-linked. Catalysis depends on charge relay system residues His-153 and Asp-206. 3 cysteine pairs are disulfide-bonded: Cys-240-Cys-316, Cys-273-Cys-296, and Cys-306-Cys-334. N-linked (GlcNAc...) asparagine glycosylation is present at Asn-279. The active-site Charge relay system is the Thr-310.

It belongs to the peptidase S1 family. As to expression, testis specific. Differentially expressed in some breast cancer tissues.

Its subcellular location is the endoplasmic reticulum. In terms of biological role, may be involved in proteolysis through its threonine endopeptidase activity. The polypeptide is Probable threonine protease PRSS50 (PRSS50) (Homo sapiens (Human)).